The chain runs to 171 residues: Protein-export protein SecB (171 aa).

Belongs to the SecB family. Homotetramer, a dimer of dimers. One homotetramer interacts with 1 SecA dimer.

It is found in the cytoplasm. Its function is as follows. One of the proteins required for the normal export of preproteins out of the cell cytoplasm. It is a molecular chaperone that binds to a subset of precursor proteins, maintaining them in a translocation-competent state. It also specifically binds to its receptor SecA. The sequence is that of Protein-export protein SecB from Granulibacter bethesdensis (strain ATCC BAA-1260 / CGDNIH1).